We begin with the raw amino-acid sequence, 258 residues long: Protein IMPACT homolog (258 aa).

Residues 10–114 (EELEAVEAIY…TELDGVLYVE (105 aa)) form the RWD domain. Residue Lys187 forms a Glycyl lysine isopeptide (Lys-Gly) (interchain with G-Cter in ubiquitin) linkage.

It belongs to the IMPACT family. Interacts (via N-terminus) with GCN1 (via C-terminus); this interaction reduces the GCN1-GCN20 complex formation and prevents the interaction of GCN1 with GCN2 protein kinase and GCN2 activation in amino acid-starved cells. Interacts (via C-terminus) with ACT1; this interaction occurs in a GCN1-independent manner. Interacts with RPL39; this interaction occurs in a GCN1-independent manner. Associates (via middle region) with ribosomes; this association occurs in a GCN1-independent manner and persists under amino acid starvation conditions.

The protein resides in the cytoplasm. Its subcellular location is the nucleus. Its function is as follows. Translational regulator that ensures constant high levels of translation under amino acid starvation. Plays a role as a negative regulator of the GCN2 kinase activity; impairs GCN1-mediated GCN2 activation, and hence GCN2-mediated eIF-2-alpha phosphorylation in amino acid-starved cells and subsequent down-regulation of protein synthesis. In normal conditions, it resides in a actin complex and has no activity. In Saccharomyces cerevisiae (strain ATCC 204508 / S288c) (Baker's yeast), this protein is Protein IMPACT homolog (YIH1).